The chain runs to 267 residues: Phosphate import ATP-binding protein PstB 2 (267 aa).

The ABC transporter domain occupies 21–262 (LATKDLHVYY…AQCQSTNDYV (242 aa)). An ATP-binding site is contributed by 53 to 60 (GPSGCGKS).

This sequence belongs to the ABC transporter superfamily. Phosphate importer (TC 3.A.1.7) family. As to quaternary structure, the complex is composed of two ATP-binding proteins (PstB), two transmembrane proteins (PstC and PstA) and a solute-binding protein (PstS).

The protein localises to the cell membrane. It carries out the reaction phosphate(out) + ATP + H2O = ADP + 2 phosphate(in) + H(+). Functionally, part of the ABC transporter complex PstSACB involved in phosphate import. Responsible for energy coupling to the transport system. This chain is Phosphate import ATP-binding protein PstB 2, found in Streptococcus pyogenes serotype M18 (strain MGAS8232).